A 193-amino-acid chain; its full sequence is Ubiquitin-conjugating enzyme E2 E1 (193 aa).

Residues 1-45 (MSDDDSRASTSSSSSSSSNQQTEKEGSTPKKKESKVSMSKNSKLL) are disordered. Ser-2 carries the post-translational modification N-acetylserine. Residues 8–18 (ASTSSSSSSSS) show a composition bias toward low complexity. Residues 22-35 (TEKEGSTPKKKESK) are compositionally biased toward basic and acidic residues. The segment covering 36–45 (VSMSKNSKLL) has biased composition (polar residues). A UBC core domain is found at 47–193 (TSAKRIQKEL…ARQWTKRYAT (147 aa)). The active-site Glycyl thioester intermediate is the Cys-131. A Glycyl lysine isopeptide (Lys-Gly) (interchain with G-Cter in ISG15) cross-link involves residue Lys-136.

This sequence belongs to the ubiquitin-conjugating enzyme family. In terms of assembly, interacts with RNF14. ISGylation suppresses ubiquitin E2 enzyme activity. Post-translationally, autoubiquitinated.

Its subcellular location is the nucleus. It carries out the reaction S-ubiquitinyl-[E1 ubiquitin-activating enzyme]-L-cysteine + [E2 ubiquitin-conjugating enzyme]-L-cysteine = [E1 ubiquitin-activating enzyme]-L-cysteine + S-ubiquitinyl-[E2 ubiquitin-conjugating enzyme]-L-cysteine.. It catalyses the reaction S-ubiquitinyl-[E1 ubiquitin-activating enzyme]-L-cysteine + [acceptor protein]-L-lysine = [E1 ubiquitin-activating enzyme]-L-cysteine + N(6)-monoubiquitinyl-[acceptor protein]-L-lysine.. The protein operates within protein modification; protein ubiquitination. Its function is as follows. Accepts ubiquitin from the E1 complex and catalyzes its covalent attachment to other proteins. Catalyzes the covalent attachment of ISG15 to other proteins. Mediates the selective degradation of short-lived and abnormal proteins. In vitro also catalyzes 'Lys-48'-linked polyubiquitination. The sequence is that of Ubiquitin-conjugating enzyme E2 E1 (Ube2e1) from Mus musculus (Mouse).